We begin with the raw amino-acid sequence, 268 residues long: Glucosamine-6-phosphate deaminase (268 aa).

The Proton acceptor; for enolization step role is filled by Asp-67. Asn-137 acts as the For ring-opening step in catalysis. His-139 functions as the Proton acceptor; for ring-opening step in the catalytic mechanism. Glu-144 acts as the For ring-opening step in catalysis.

This sequence belongs to the glucosamine/galactosamine-6-phosphate isomerase family. NagB subfamily. Homohexamer.

It carries out the reaction alpha-D-glucosamine 6-phosphate + H2O = beta-D-fructose 6-phosphate + NH4(+). The protein operates within amino-sugar metabolism; N-acetylneuraminate degradation; D-fructose 6-phosphate from N-acetylneuraminate: step 5/5. Catalyzes the reversible isomerization-deamination of glucosamine 6-phosphate (GlcN6P) to form fructose 6-phosphate (Fru6P) and ammonium ion. This chain is Glucosamine-6-phosphate deaminase, found in Colwellia psychrerythraea (strain 34H / ATCC BAA-681) (Vibrio psychroerythus).